The chain runs to 312 residues: Protoheme IX farnesyltransferase (312 aa).

The next 9 helical transmembrane spans lie at 29 to 49 (VMSLVVFTGLVGLVLAPGHMN), 50 to 70 (PVLAVISILCIAVGAGASGAL), 90 to 110 (IPAGIIAPNQVLAFGLTLSAF), 117 to 137 (LMVNWLAAALLAFTIFFYAVI), 150 to 170 (IVIGGAAGAFPPMIGWAAATG), 177 to 197 (LVLFMIIFLWTPPHFWALSLF), 223 to 243 (ALFYAVLMAPVGVLPWVMGFA), 246 to 266 (FYGVVSTLLGLAFVYYAWRLW), and 292 to 312 (IFAVLLFEALTFKLLAAFGVF).

The protein belongs to the UbiA prenyltransferase family. Protoheme IX farnesyltransferase subfamily.

The protein localises to the cell inner membrane. It catalyses the reaction heme b + (2E,6E)-farnesyl diphosphate + H2O = Fe(II)-heme o + diphosphate. It functions in the pathway porphyrin-containing compound metabolism; heme O biosynthesis; heme O from protoheme: step 1/1. Functionally, converts heme B (protoheme IX) to heme O by substitution of the vinyl group on carbon 2 of heme B porphyrin ring with a hydroxyethyl farnesyl side group. The sequence is that of Protoheme IX farnesyltransferase from Brucella melitensis biotype 1 (strain ATCC 23456 / CCUG 17765 / NCTC 10094 / 16M).